A 189-amino-acid chain; its full sequence is HGPRTase-like protein (189 aa).

This sequence belongs to the purine/pyrimidine phosphoribosyltransferase family. Archaeal HPRT subfamily.

May catalyze a purine salvage reaction, the substrate is unknown. This Halorhabdus utahensis (strain DSM 12940 / JCM 11049 / AX-2) protein is HGPRTase-like protein.